A 645-amino-acid chain; its full sequence is Developmental regulatory protein wetA (645 aa).

Disordered regions lie at residues 158–187 (SLHS…RKPK), 201–249 (TNLR…VSPP), 284–376 (YYGQ…QMHW), 461–578 (AQTF…DGAS), and 596–618 (GVAP…DRRR). The segment covering 240–249 (TQGNLPVSPP) has biased composition (polar residues). Basic residues-rich tracts occupy residues 315 to 326 (QHHHHPHHHHQQ) and 351 to 361 (QHQHQHHHQQQ). The segment covering 362–373 (QHHQQQQQQQHQ) has biased composition (low complexity). Positions 509-518 (GPSSSPTPAD) are enriched in polar residues. Positions 528-546 (SSGASVSSLRSSSGRLPAS) are enriched in low complexity. Residues 562–572 (ISGSNSATSLG) show a composition bias toward polar residues.

This sequence belongs to the wetA family.

Functionally, brlA, abaA and wetA are pivotal regulators of conidiophore development and conidium maturation. They act individually and together to regulate their own expression and that of numerous other sporulation-specific genes. BrlA, abaA and wetA act together to positively regulate the expression of the Pks1 gene cluster that mediates the biosynthesis of an anthraquinone derivative pigment that contributes to conidial pigmentation that provides protection from UV radiation, heat and cold stress. In Metarhizium robertsii (strain ARSEF 23 / ATCC MYA-3075) (Metarhizium anisopliae (strain ARSEF 23)), this protein is Developmental regulatory protein wetA.